Reading from the N-terminus, the 567-residue chain is Glucose-6-phosphate isomerase, cytosolic A (567 aa).

D-glucose 6-phosphate-binding positions include 156-157 (GS), 212-217 (SKTFTT), Q356, E360, H391, and K516. E360 acts as the Proton donor in catalysis. Active-site residues include H391 and K516.

Belongs to the GPI family. As to quaternary structure, homodimer.

It is found in the cytoplasm. It carries out the reaction alpha-D-glucose 6-phosphate = beta-D-fructose 6-phosphate. Its pathway is carbohydrate degradation; glycolysis; D-glyceraldehyde 3-phosphate and glycerone phosphate from D-glucose: step 2/4. Functionally, catalyzes the conversion of glucose-6-phosphate to fructose-6-phosphate, the second step in glycolysis, and the reverse reaction during gluconeogenesis. The polypeptide is Glucose-6-phosphate isomerase, cytosolic A (Oryza sativa subsp. japonica (Rice)).